Consider the following 328-residue polypeptide: Ferredoxin--NADP reductase (328 aa).

Positions 14, 33, 41, 46, 90, and 126 each coordinate FAD.

This sequence belongs to the ferredoxin--NADP reductase type 2 family. Homodimer. The cofactor is FAD.

The catalysed reaction is 2 reduced [2Fe-2S]-[ferredoxin] + NADP(+) + H(+) = 2 oxidized [2Fe-2S]-[ferredoxin] + NADPH. The protein is Ferredoxin--NADP reductase of Mycoplasmoides gallisepticum (strain R(low / passage 15 / clone 2)) (Mycoplasma gallisepticum).